The primary structure comprises 338 residues: Nucleoid-associated protein HI_0839 (338 aa).

Belongs to the YejK family.

The protein resides in the cytoplasm. The protein localises to the nucleoid. This is Nucleoid-associated protein HI_0839 from Haemophilus influenzae (strain ATCC 51907 / DSM 11121 / KW20 / Rd).